The chain runs to 411 residues: NADH-quinone oxidoreductase subunit H (411 aa).

9 consecutive transmembrane segments (helical) span residues 18–38, 84–104, 124–144, 165–185, 198–218, 260–280, 288–308, 321–341, and 352–372; these read LAKS…AILI, WIYL…FAVI, LPVA…GIVL, VISY…YAGT, TWYI…MVGE, VSAL…PISI, WWPL…FMWL, MALG…IVAI, and APAT…ALLG.

This sequence belongs to the complex I subunit 1 family. As to quaternary structure, NDH-1 is composed of 14 different subunits. Subunits NuoA, H, J, K, L, M, N constitute the membrane sector of the complex.

The protein resides in the cell membrane. The enzyme catalyses a quinone + NADH + 5 H(+)(in) = a quinol + NAD(+) + 4 H(+)(out). In terms of biological role, NDH-1 shuttles electrons from NADH, via FMN and iron-sulfur (Fe-S) centers, to quinones in the respiratory chain. The immediate electron acceptor for the enzyme in this species is believed to be menaquinone. Couples the redox reaction to proton translocation (for every two electrons transferred, four hydrogen ions are translocated across the cytoplasmic membrane), and thus conserves the redox energy in a proton gradient. This subunit may bind ubiquinone. The protein is NADH-quinone oxidoreductase subunit H of Mycolicibacterium vanbaalenii (strain DSM 7251 / JCM 13017 / BCRC 16820 / KCTC 9966 / NRRL B-24157 / PYR-1) (Mycobacterium vanbaalenii).